The chain runs to 228 residues: PKHD-type hydroxylase RPE_4577 (228 aa).

The Fe2OG dioxygenase domain maps to 78 to 180; the sequence is TIFPPLFNRY…RIASFFWTQS (103 aa). The Fe cation site is built by His-98, Asp-100, and His-161. Residue Arg-171 participates in 2-oxoglutarate binding.

The cofactor is Fe(2+). It depends on L-ascorbate as a cofactor.

This Rhodopseudomonas palustris (strain BisA53) protein is PKHD-type hydroxylase RPE_4577.